The primary structure comprises 543 residues: Cytochrome P450 1B1 (543 aa).

Residue C470 coordinates heme.

Belongs to the cytochrome P450 family. Heme is required as a cofactor.

The protein resides in the endoplasmic reticulum membrane. Its subcellular location is the microsome membrane. The protein localises to the mitochondrion. The catalysed reaction is an organic molecule + reduced [NADPH--hemoprotein reductase] + O2 = an alcohol + oxidized [NADPH--hemoprotein reductase] + H2O + H(+). It catalyses the reaction 17beta-estradiol + reduced [NADPH--hemoprotein reductase] + O2 = 2-hydroxy-17beta-estradiol + oxidized [NADPH--hemoprotein reductase] + H2O + H(+). The enzyme catalyses 17beta-estradiol + reduced [NADPH--hemoprotein reductase] + O2 = 4-hydroxy-17beta-estradiol + oxidized [NADPH--hemoprotein reductase] + H2O + H(+). It carries out the reaction estrone + reduced [NADPH--hemoprotein reductase] + O2 = 2-hydroxyestrone + oxidized [NADPH--hemoprotein reductase] + H2O + H(+). The catalysed reaction is estrone + reduced [NADPH--hemoprotein reductase] + O2 = 4-hydroxyestrone + oxidized [NADPH--hemoprotein reductase] + H2O + H(+). It catalyses the reaction testosterone + reduced [NADPH--hemoprotein reductase] + O2 = 6beta,17beta-dihydroxyandrost-4-en-3-one + oxidized [NADPH--hemoprotein reductase] + H2O + H(+). The enzyme catalyses progesterone + reduced [NADPH--hemoprotein reductase] + O2 = 6beta-hydroxyprogesterone + oxidized [NADPH--hemoprotein reductase] + H2O + H(+). It carries out the reaction progesterone + reduced [NADPH--hemoprotein reductase] + O2 = 16alpha-hydroxyprogesterone + oxidized [NADPH--hemoprotein reductase] + H2O + H(+). The catalysed reaction is all-trans-retinol + reduced [NADPH--hemoprotein reductase] + O2 = all-trans-retinal + oxidized [NADPH--hemoprotein reductase] + 2 H2O + H(+). It catalyses the reaction all-trans-retinal + reduced [NADPH--hemoprotein reductase] + O2 = all-trans-retinoate + oxidized [NADPH--hemoprotein reductase] + H2O + 2 H(+). The enzyme catalyses (5Z,8Z,11Z,14Z)-eicosatetraenoate + reduced [NADPH--hemoprotein reductase] + O2 = (8R,9S)-epoxy-(5Z,11Z,14Z)-eicosatrienoate + oxidized [NADPH--hemoprotein reductase] + H2O + H(+). It carries out the reaction (5Z,8Z,11Z,14Z)-eicosatetraenoate + reduced [NADPH--hemoprotein reductase] + O2 = (11R,12S)-epoxy-(5Z,8Z,14Z)-eicosatrienoate + oxidized [NADPH--hemoprotein reductase] + H2O + H(+). The catalysed reaction is (5Z,8Z,11Z,14Z)-eicosatetraenoate + reduced [NADPH--hemoprotein reductase] + O2 = (11S,12R)-epoxy-(5Z,8Z,14Z)-eicosatrienoate + oxidized [NADPH--hemoprotein reductase] + H2O + H(+). It catalyses the reaction (5Z,8Z,11Z,14Z)-eicosatetraenoate + reduced [NADPH--hemoprotein reductase] + O2 = (14S,15R)-epoxy-(5Z,8Z,11Z)-eicosatrienoate + oxidized [NADPH--hemoprotein reductase] + H2O + H(+). The enzyme catalyses (5Z,8Z,11Z,14Z)-eicosatetraenoate + reduced [NADPH--hemoprotein reductase] + O2 = (14R,15S)-epoxy-(5Z,8Z,11Z)-eicosatrienoate + oxidized [NADPH--hemoprotein reductase] + H2O + H(+). It carries out the reaction (5S)-hydroperoxy-(6E,8Z,11Z,14Z)-eicosatetraenoate = 5-oxo-(6E,8Z,11Z,14Z)-eicosatetraenoate + H2O. The catalysed reaction is (12S)-hydroperoxy-(5Z,8Z,10E,14Z)-eicosatetraenoate = 12-oxo-(5Z,8Z,10E,14Z)-eicosatetraenoate + H2O. It catalyses the reaction (15S)-hydroperoxy-(5Z,8Z,11Z,13E)-eicosatetraenoate = 15-oxo-(5Z,8Z,11Z,13E)-eicosatetraenoate + H2O. The enzyme catalyses (13S)-hydroperoxy-(9Z,11E)-octadecadienoate = 13-oxo-(9Z,11E)-octadecadienoate + H2O. It participates in steroid hormone biosynthesis. Its pathway is cofactor metabolism; retinol metabolism. The protein operates within lipid metabolism; arachidonate metabolism. Its activity is regulated as follows. Enzyme activity is increased by cytochrome b5. Enzyme activity is increased by liposomes containing anionic phospholipids, phosphatidic acid and cardiolipin. Inhibited by naringenin with an IC(50) of 5 uM. Its function is as follows. A cytochrome P450 monooxygenase involved in the metabolism of various endogenous substrates, including fatty acids, steroid hormones and vitamins. Mechanistically, uses molecular oxygen inserting one oxygen atom into a substrate, and reducing the second into a water molecule, with two electrons provided by NADPH via cytochrome P450 reductase (NADPH--hemoprotein reductase). Exhibits catalytic activity for the formation of hydroxyestrogens from 17beta-estradiol (E2), namely 2- and 4-hydroxy E2. Metabolizes testosterone and progesterone to B or D ring hydroxylated metabolites. May act as a major enzyme for all-trans retinoic acid biosynthesis in extrahepatic tissues. Catalyzes two successive oxidative transformation of all-trans retinol to all-trans retinal and then to the active form all-trans retinoic acid. Catalyzes the epoxidation of double bonds of certain PUFA. Converts arachidonic acid toward epoxyeicosatrienoic acid (EpETrE) regioisomers, 8,9-, 11,12-, and 14,15- EpETrE, that function as lipid mediators in the vascular system. Additionally, displays dehydratase activity toward oxygenated eicosanoids including hydroperoxyeicosatetraenoates (HpETEs). This activity is independent of cytochrome P450 reductase, NADPH, and O2. Also involved in the oxidative metabolism of xenobiotics, particularly converting polycyclic aromatic hydrocarbons and heterocyclic aryl amines procarcinogens to DNA-damaging products. Plays an important role in retinal vascular development. Under ambient/hyperoxic O2 conditions, promotes angiogenesis and capillary morphogenesis of retinal endothelial cells and pericytes, likely by metabolizing the oxygenated products symptomatic of oxidative stress. Also, contributes to oxidative homeostasis and ultrastructural organization and function of trabecular meshwork tissue through modulation of POSTN expression. The sequence is that of Cytochrome P450 1B1 from Rattus norvegicus (Rat).